The primary structure comprises 348 residues: NADH-quinone oxidoreductase subunit H (348 aa).

8 helical membrane-spanning segments follow: residues 25–45, 95–115, 128–148, 168–188, 204–224, 254–274, 287–307, and 327–347; these read ILFL…VAAL, FMFI…FAII, IGIL…MFGG, ISYE…TGSF, WNIF…VAVT, FFIG…CLFF, ILPP…MFVL, and VCLP…LISA.

Belongs to the complex I subunit 1 family. NDH-1 is composed of 14 different subunits. Subunits NuoA, H, J, K, L, M, N constitute the membrane sector of the complex.

The protein resides in the cell inner membrane. The catalysed reaction is a quinone + NADH + 5 H(+)(in) = a quinol + NAD(+) + 4 H(+)(out). Its function is as follows. NDH-1 shuttles electrons from NADH, via FMN and iron-sulfur (Fe-S) centers, to quinones in the respiratory chain. The immediate electron acceptor for the enzyme in this species is believed to be ubiquinone. Couples the redox reaction to proton translocation (for every two electrons transferred, four hydrogen ions are translocated across the cytoplasmic membrane), and thus conserves the redox energy in a proton gradient. This subunit may bind ubiquinone. The chain is NADH-quinone oxidoreductase subunit H from Psychrobacter sp. (strain PRwf-1).